A 663-amino-acid polypeptide reads, in one-letter code: MHLPRRRRLQRNRIFFFLAVVSLLSVYQLQFSPSAIPALLTAHQHEDPVKVTSREPFRNKTSKTGNVTAAPKIRHCVYIDPEPTVPITASEDTTQRENVNESYPDEKPVYESKGEYPQDLFSVEERRQGWVVLHIFGMMYVFVALAIVCDEYFVPALGVITEKLQISEDVAGATFMAAGGSAPELFTSLIGVFISHSNVGIGTIVGSAVFNILFVIGTCALFSREILHLTWWPLFRDISFYIVDLLMLILFFLDSVIDWWESLLLLTAYATYVFTMKHNVSLEQWVKEELSKKLNAVQAASAEHMRKKSSVAVAEDGTKPADGKKLQPTTALQRGTSSASLHNSQMRSTIFQLMIHTLDPLAGAKFKDRVDILSNIAKVKADSLTGQGTKPEAEEEKQASQNTVQVTPASDSEPSKDKQKEDTPQDGQPPSDSDNSEDSSSDSEDDSDDDSTDDEENDEPLSLEWPETRKKQAIYLFLFPIVFPLWSTIPDVRNPDSKKFFVITFFGSIIWIAAFSYLMVWWAHQVGETIGISEEIMGLTILAAGTSIPDLITSVIVARKGLGDMAVSSSVGSNIFDITVGLPVPWFLYSVFNGFSPVAVSSNGLFCAIVLLFLMLLFVIISIALCKWKMNKILGVTMFALYFVFLIISVMLEDRIISCPVSV.

Over 32–128 (SPSAIPALLT…DLFSVEERRQ (97 aa)) the chain is Extracellular. N59, N66, and N100 each carry an N-linked (GlcNAc...) asparagine glycan. The chain crosses the membrane as a helical span at residues 129–149 (GWVVLHIFGMMYVFVALAIVC). The Cytoplasmic portion of the chain corresponds to 150–173 (DEYFVPALGVITEKLQISEDVAGA). The Alpha-1 repeat unit spans residues 170 to 210 (VAGATFMAAGGSAPELFTSLIGVFISHSNVGIGTIVGSAVF). The helical transmembrane segment at 174–194 (TFMAAGGSAPELFTSLIGVFI) threads the bilayer. Residues 195 to 200 (SHSNVG) lie on the Extracellular side of the membrane. A helical membrane pass occupies residues 201–221 (IGTIVGSAVFNILFVIGTCAL). Residues 222–228 (FSREILH) are Cytoplasmic-facing. A helical membrane pass occupies residues 229-253 (LTWWPLFRDISFYIVDLLMLILFFL). Residues 254–259 (DSVIDW) are Extracellular-facing. A helical transmembrane segment spans residues 260-276 (WESLLLLTAYATYVFTM). The Cytoplasmic segment spans residues 277 to 471 (KHNVSLEQWV…SLEWPETRKK (195 aa)). 2 disordered regions span residues 308 to 343 (KSSVAVAEDGTKPADGKKLQPTTALQRGTSSASLHN) and 384 to 465 (LTGQ…SLEW). Positions 316 to 325 (DGTKPADGKK) are enriched in basic and acidic residues. Composition is skewed to polar residues over residues 327 to 343 (QPTTALQRGTSSASLHN) and 399 to 412 (ASQNTVQVTPASDS). S337 bears the Phosphoserine mark. Residues 413–423 (EPSKDKQKEDT) show a composition bias toward basic and acidic residues. Residues 434-461 (DNSEDSSSDSEDDSDDDSTDDEENDEPL) show a composition bias toward acidic residues. The chain crosses the membrane as a helical span at residues 472–492 (QAIYLFLFPIVFPLWSTIPDV). Over 493 to 499 (RNPDSKK) the chain is Extracellular. Residues 500 to 520 (FFVITFFGSIIWIAAFSYLMV) traverse the membrane as a helical segment. Residues 521 to 535 (WWAHQVGETIGISEE) are Cytoplasmic-facing. The chain crosses the membrane as a helical span at residues 536 to 556 (IMGLTILAAGTSIPDLITSVI). One copy of the Alpha-2 repeat lies at 543-574 (AAGTSIPDLITSVIVARKGLGDMAVSSSVGSN). Over 557 to 574 (VARKGLGDMAVSSSVGSN) the chain is Extracellular. The chain crosses the membrane as a helical span at residues 575–595 (IFDITVGLPVPWFLYSVFNGF). Residues 596-604 (SPVAVSSNG) lie on the Cytoplasmic side of the membrane. The chain crosses the membrane as a helical span at residues 605 to 625 (LFCAIVLLFLMLLFVIISIAL). The Extracellular segment spans residues 626-632 (CKWKMNK). A helical membrane pass occupies residues 633 to 653 (ILGVTMFALYFVFLIISVMLE). Residues 654–663 (DRIISCPVSV) lie on the Cytoplasmic side of the membrane.

It belongs to the Ca(2+):cation antiporter (CaCA) (TC 2.A.19) family. SLC24A subfamily. In terms of processing, the uncleaved signal sequence is required for efficient membrane targeting and proper membrane integration and topology. Retinal rods. Localizes to the inner segment of rod photoreceptors.

Its subcellular location is the cell membrane. The catalysed reaction is Ca(2+)(out) + K(+)(out) + 4 Na(+)(in) = Ca(2+)(in) + K(+)(in) + 4 Na(+)(out). Calcium, potassium:sodium antiporter that transports 1 Ca(2+) and 1 K(+) in exchange for 4 Na(+). Critical component of the visual transduction cascade, controlling the calcium concentration of outer segments during light and darkness. Light causes a rapid lowering of cytosolic free calcium in the outer segment of both retinal rod and cone photoreceptors and the light-induced lowering of calcium is caused by extrusion via this protein which plays a key role in the process of light adaptation. This Gallus gallus (Chicken) protein is Sodium/potassium/calcium exchanger 1 (SLC24A1).